We begin with the raw amino-acid sequence, 485 residues long: E3 ubiquitin-protein ligase TRIM34A (485 aa).

Residues 15 to 59 form an RING-type zinc finger; sequence CPVCQELLTKALSLGCGHRVCQACLITKKNAVINPREKSSCPVCG. The B box-type zinc finger occupies 91 to 132; it reads TKRDLCVHHGEKLLLFCKEDKKAICWVCERSQEHRGHHTFLW. Residues Cys-96, His-99, Cys-118, and His-124 each coordinate Zn(2+). Residues 136–170 adopt a coiled-coil conformation; the sequence is VRECQENLQKALTRLRKEQEKVETLEADIKEDRLS. One can recognise a B30.2/SPRY domain in the interval 282–485; it reads LSGMLQKFRE…APMTLCPLNS (204 aa).

This sequence belongs to the TRIM/RBCC family. In terms of assembly, homotrimer. Interacts (via B-box and SPRY domain) with TRIM5.

It is found in the cytoplasm. Its subcellular location is the mitochondrion. It carries out the reaction S-ubiquitinyl-[E2 ubiquitin-conjugating enzyme]-L-cysteine + [acceptor protein]-L-lysine = [E2 ubiquitin-conjugating enzyme]-L-cysteine + N(6)-ubiquitinyl-[acceptor protein]-L-lysine.. It participates in protein modification; protein ubiquitination. In terms of biological role, functions as antiviral protein and contributes to the defense against retroviral infections. Acts as a capsid-specific restriction factor with the help of TRIM5 and prevents infection from non-host-adapted retroviruses. During influenza A virus infection, promotes programmed cell death by targeting ZBP1 for 'Lys-63'-linked polyubiquitination. In turn, promotes ZBP1 recruitment of RIPK3 to mediate virus-induced programmed necrosis. Negatively regulates the function of mitochondria by enhancing mitochondrial depolarization leading to cytochrome c release and mitochondria-dependent apoptosis. Also promotes the formation of multinucleated giant cells by means of cell fusion and phagocytosis in epithelial cells. Plays an essential role in sustaining the integrity of the inner mucus layer in the colon by controlling the exocytosis of the major component of colonic mucus MUC2 from colonic goblet cells. The polypeptide is E3 ubiquitin-protein ligase TRIM34A (Mus musculus (Mouse)).